Consider the following 544-residue polypeptide: Glycoprotein gp100 (544 aa).

A signal peptide spans 1–19 (MKNFILLVFLFLLVSNSLG). Topologically, residues 20 to 489 (KSNKKDDQSP…SGGGGNKKLY (470 aa)) are extracellular. N-linked (GlcNAc...) asparagine glycosylation occurs at asparagine 80. The segment covering 84–99 (EPQNNPIPTVSINPDQ) has biased composition (polar residues). The tract at residues 84-215 (EPQNNPIPTV…TPTRPSSSVS (132 aa)) is disordered. Low complexity-rich tracts occupy residues 126–142 (SKPT…TIPP), 150–165 (PQTT…TPTP), and 189–199 (PKPTKSSKPTK). N-linked (GlcNAc...) asparagine glycans are attached at residues asparagine 224, asparagine 308, asparagine 332, asparagine 366, asparagine 380, asparagine 410, asparagine 422, and asparagine 478. Residues 444–480 (KPSTTDDDNNKNNDDGDSEIDSVGKSAVDSSKSNNNS) are disordered. A helical membrane pass occupies residues 490–510 (LLIILPTVLFIIVAALVAIFI). Residues 511-544 (KTRVSQNSGSKVNKNNNKKDSINVPFQMLDEITT) lie on the Cytoplasmic side of the membrane.

In terms of processing, N- and O-glycosylated.

The protein resides in the membrane. This Dictyostelium discoideum (Social amoeba) protein is Glycoprotein gp100 (gppA).